Consider the following 817-residue polypeptide: MAALASFTRNSRSYGQQPIDVTQQGQRDRSVMSLDAQGRSVSHECPTSTTLVRQLYLPQIPQSASFAAAPTSFSGASSSSSNHHHPVYHSQNSLPPNLLGSSQNSASSNSLVQGHRNPALGSGNTLTRSYHQPSSTNSSTNNLYGPLGTISRDLKQSIRDISPPVINSSANPHLVNYVQTSSFDNGSYEFPSGQAQQQRRLGGSQQHLAPLQQTASSLYSNPQSSSSQLLGQQQAVRPNYAYQQSLPRQQHINSHQTQAFFGTVRGPTNSTNIVTPLRASKTMIDVLAPVRDTVAAQATGLPNVGTSSSNGSSNSSSGVGSGGSGSLMTQSIGGPNKHLSASHSTLNTASTHDMMHSKIPKSPSNESLSRSHTSSSGGSQGGHNSNSGSNSGFRPEDAVQTFGAKLVPFEKNEIYNYTRVFFVGSHAKKQAGVIGGANNGGYDDENGSYQLVVHDHIAYRYEVLKVIGKGSFGQVIKAFDHKYQQYVALKLVRNEKRFHRQADEEIRILDHLRRQDSDGTHNIIHMLDYFNFRNHKCITFELLSINLYELIKRNKFQGFSLMLVRKFAYSMLLCLDLLQKNRLIHCDLKPENVLLKQQGRSGIKVIDFGSSCFDDQRIYTYIQSRFYRAPEVILGTKYGMPIDMWSLGCILAELLTGYPLLPGEDENDQLALIIELLGMPPPKSLETAKRARTFITSKGYPRYCTATSMPDGSVVLAGARSKRGKMRGPPASRSWSTALKNMGDELFVDFLKRCLDWDPETRMTPAQALKHKWLRRRLPNPPRDGLESMGGLADHEKKTETLPNIDSNANILMRKKF.

4 disordered regions span residues 1 to 46 (MAAL…HECP), 70 to 148 (PTSF…GPLG), 186 to 206 (GSYEFPSGQAQQQRRLGGSQQ), and 301 to 396 (LPNV…FRPE). A compositionally biased stretch (polar residues) spans 7 to 25 (FTRNSRSYGQQPIDVTQQG). Composition is skewed to low complexity over residues 70-81 (PTSFSGASSSSS) and 97-111 (NLLGSSQNSASSNSL). Polar residues-rich tracts occupy residues 122 to 143 (SGNTLTRSYHQPSSTNSSTNNL) and 193 to 206 (GQAQQQRRLGGSQQ). Residues 303-318 (NVGTSSSNGSSNSSSG) show a composition bias toward low complexity. The span at 327 to 351 (LMTQSIGGPNKHLSASHSTLNTAST) shows a compositional bias: polar residues. Phosphoserine; by cdk-1 is present on S362. The span at 364 to 392 (SNESLSRSHTSSSGGSQGGHNSNSGSNSG) shows a compositional bias: low complexity. The region spanning 461-774 (YEVLKVIGKG…PAQALKHKWL (314 aa)) is the Protein kinase domain. Residues 467–475 (IGKGSFGQV) and K490 each bind ATP. The active-site Proton acceptor is the D587. Position 621 is a phosphotyrosine; by autocatalysis (Y621).

Belongs to the protein kinase superfamily. CMGC Ser/Thr protein kinase family. MNB/DYRK subfamily. In terms of assembly, part of a complex, consisting of pseudophosphatases egg-3, egg-4, egg-5 and kinase mbk-2; this complex is required for the oocyte-to-zygote transition. Interacts (via Tyr-619 and Tyr-621) with egg-4 (via tyrosine-protein phosphatase domain) and egg-5 (via tyrosine-protein phosphatase domain); mbk-2 tyrosine phosphorylation enhances the interaction. The interaction inhibits mbk-2 kinase activity and is required for mbk-2 oocyte cortex localization. Interacts (via N-terminus) with egg-3 (via tyrosine-protein phosphatase domain); the interaction does not affect mbk-2 kinase activity, is enhanced by mbk-2 tyrosine phosphorylation status and requires prior binding of mbk-2 to egg-4 and egg-5. Requires Mg(2+) as cofactor. Autophosphorylated. In L1 larvae, expressed widely in the nervous system, including head neurons and the ventral nerve cord. In adult animals, continues to be expressed in the nervous system and is also expressed in body wall muscle.

The protein localises to the cytoplasm. The protein resides in the cell cortex. The enzyme catalyses L-seryl-[protein] + ATP = O-phospho-L-seryl-[protein] + ADP + H(+). It catalyses the reaction L-threonyl-[protein] + ATP = O-phospho-L-threonyl-[protein] + ADP + H(+). It carries out the reaction L-tyrosyl-[protein] + ATP = O-phospho-L-tyrosyl-[protein] + ADP + H(+). With respect to regulation, activated during oocyte maturation by phosphorylation on Ser-362 by cdk-1. The pseudotyrosine phosphatases egg-4 and egg-5 sequester activated mbk-2 until the meiotic divisions and inhibit mbk-2 kinase activity directly, using a mixed-inhibition mechanism that does not involve tyrosine dephosphorylation. Its function is as follows. Required for oocyte-to-zygote transition in which it phosphorylates oocyte proteins, including mei-1, oma-1, oma-2, mex-5, and mex-6, modifying their activity and/or stability following meiosis. Through phosphorylation of P granule components including meg-1, promotes the disassembly of zygotic P granules in the anterior cytoplasm during zygote polarization, and thus plays a role in P granule distribution and segregation in early stage embryos following meiosis. Functions in both spindle positioning and in the posterior localization of cytoplasmic determinants, including pie-1, pos-1, and pgl-1, in early embryos. Involved in the asymmetric distribution of plk-1 at the 2-cell embryonic stage. This Caenorhabditis elegans protein is Dual specificity tyrosine-phosphorylation-regulated kinase mbk-2.